The primary structure comprises 642 residues: Threonine--tRNA ligase (642 aa).

The region spanning methionine 1–threonine 61 is the TGS domain. The tract at residues aspartate 243 to proline 534 is catalytic. Zn(2+) is bound by residues cysteine 334, histidine 385, and histidine 511.

Belongs to the class-II aminoacyl-tRNA synthetase family. Homodimer. Requires Zn(2+) as cofactor.

The protein resides in the cytoplasm. It carries out the reaction tRNA(Thr) + L-threonine + ATP = L-threonyl-tRNA(Thr) + AMP + diphosphate + H(+). In terms of biological role, catalyzes the attachment of threonine to tRNA(Thr) in a two-step reaction: L-threonine is first activated by ATP to form Thr-AMP and then transferred to the acceptor end of tRNA(Thr). Also edits incorrectly charged L-seryl-tRNA(Thr). The protein is Threonine--tRNA ligase of Enterobacter sp. (strain 638).